Here is a 366-residue protein sequence, read N- to C-terminus: tRNA-specific 2-thiouridylase MnmA (366 aa).

ATP is bound by residues 10-17 (GLSGGVDS) and I36. The active-site Nucleophile is C98. Residues C98 and C194 are joined by a disulfide bond. G122 serves as a coordination point for ATP. Residues 144 to 146 (KDQ) form an interaction with tRNA region. The Cysteine persulfide intermediate role is filled by C194. Residues 303 to 304 (RY) form an interaction with tRNA region.

It belongs to the MnmA/TRMU family.

The protein localises to the cytoplasm. It catalyses the reaction S-sulfanyl-L-cysteinyl-[protein] + uridine(34) in tRNA + AH2 + ATP = 2-thiouridine(34) in tRNA + L-cysteinyl-[protein] + A + AMP + diphosphate + H(+). In terms of biological role, catalyzes the 2-thiolation of uridine at the wobble position (U34) of tRNA, leading to the formation of s(2)U34. The chain is tRNA-specific 2-thiouridylase MnmA from Chlorobaculum tepidum (strain ATCC 49652 / DSM 12025 / NBRC 103806 / TLS) (Chlorobium tepidum).